We begin with the raw amino-acid sequence, 296 residues long: Nicotinate dehydrogenase FAD-subunit (296 aa).

In terms of domain architecture, FAD-binding PCMH-type spans 1-179 (MKDFEFFAPK…TEVIIDRPDA (179 aa)). FAD contacts are provided by residues 29–36 (IIAGGTDL), G101, 110–114 (TIGGN), D123, R160, M169, and K187.

In terms of assembly, heterooctamer of NDHM, NDHL, NDHS and NDHF. Dimer of heterotetramers. Requires FAD as cofactor.

The catalysed reaction is nicotinate + NADP(+) + H2O = 6-hydroxynicotinate + NADPH + H(+). It functions in the pathway cofactor degradation; nicotinate degradation; 6-hydroxynicotinate from nicotinate: step 1/1. Reversibly inactivated by selenide and sulfide. Not inhibited by cyanide. In terms of biological role, catalyzes the hydroxylation of nicotinate to 6-hydroxynicotinate. Also active against 2-pyrazinecarboxylic acid, but inactive against other nicotinate analogs. The chain is Nicotinate dehydrogenase FAD-subunit (ndhF) from Eubacterium barkeri (Clostridium barkeri).